An 852-amino-acid polypeptide reads, in one-letter code: G-type lectin S-receptor-like serine/threonine-protein kinase At4g03230 (852 aa).

The N-terminal stretch at 1–19 (MILSVFFYMFLLHIRRLDC) is a signal peptide. The region spanning 20 to 154 (FVAVQDSKTL…GNEANVVWQS (135 aa)) is the Bulb-type lectin domain. Residues 20-444 (FVAVQDSKTL…RGRGRYGEAK (425 aa)) lie on the Extracellular side of the membrane. N-linked (GlcNAc...) asparagine glycans are attached at residues Asn37, Asn59, Asn171, Asn187, Asn234, and Asn243. The region spanning 285 to 321 (PRDECSVYNACGNFGSCNSKNEEMCKCLPGFRPNFLE) is the EGF-like domain. Cystine bridges form between Cys289–Cys301 and Cys295–Cys309. The 88-residue stretch at 339 to 426 (CGKDGVVVGD…SRNVFIRVAV (88 aa)) folds into the PAN domain. A glycan (N-linked (GlcNAc...) asparagine) is linked at Asn352. Disulfide bonds link Cys373–Cys400 and Cys377–Cys383. A helical transmembrane segment spans residues 445-465 (TPVVLIIVVTFTSAAILVVLS). Residues 466–852 (STASYVFLQR…ELTITLEDGR (387 aa)) are Cytoplasmic-facing. One can recognise a Protein kinase domain in the interval 532–819 (FSNANKLGQG…TLPTPKQPAF (288 aa)). Residues 538 to 546 (LGQGGFGPV) and Lys560 contribute to the ATP site. Ser566 is subject to Phosphoserine. The segment at 621-638 (KLCQRLDWKMRCNIILGI) is caM-binding. The active-site Proton acceptor is the Asp657. 2 positions are modified to phosphoserine: Ser661 and Ser674. Thr691 is subject to Phosphothreonine. Residues 826–852 (SSSKASSSTKPETCSENELTITLEDGR) form a disordered region. Ser831 and Ser840 each carry phosphoserine. Over residues 834-845 (TKPETCSENELT) the composition is skewed to polar residues. The residue at position 847 (Thr847) is a Phosphothreonine.

This sequence belongs to the protein kinase superfamily. Ser/Thr protein kinase family.

The protein resides in the cell membrane. The enzyme catalyses L-seryl-[protein] + ATP = O-phospho-L-seryl-[protein] + ADP + H(+). The catalysed reaction is L-threonyl-[protein] + ATP = O-phospho-L-threonyl-[protein] + ADP + H(+). This is G-type lectin S-receptor-like serine/threonine-protein kinase At4g03230 from Arabidopsis thaliana (Mouse-ear cress).